Here is a 104-residue protein sequence, read N- to C-terminus: Co-chaperonin GroES 2 (104 aa).

This sequence belongs to the GroES chaperonin family. In terms of assembly, heptamer of 7 subunits arranged in a ring. Interacts with the chaperonin GroEL.

The protein resides in the cytoplasm. Functionally, together with the chaperonin GroEL, plays an essential role in assisting protein folding. The GroEL-GroES system forms a nano-cage that allows encapsulation of the non-native substrate proteins and provides a physical environment optimized to promote and accelerate protein folding. GroES binds to the apical surface of the GroEL ring, thereby capping the opening of the GroEL channel. This chain is Co-chaperonin GroES 2, found in Rhodopseudomonas palustris (strain ATCC BAA-98 / CGA009).